A 430-amino-acid polypeptide reads, in one-letter code: UDP-N-acetylglucosamine 1-carboxyvinyltransferase (430 aa).

22–23 (KN) provides a ligand contact to phosphoenolpyruvate. Arg102 is a binding site for UDP-N-acetyl-alpha-D-glucosamine. Catalysis depends on Cys126, which acts as the Proton donor. The residue at position 126 (Cys126) is a 2-(S-cysteinyl)pyruvic acid O-phosphothioketal. Residues 131 to 135 (RPVDL), 172 to 175 (KVSV), Asp317, and Ile339 contribute to the UDP-N-acetyl-alpha-D-glucosamine site.

Belongs to the EPSP synthase family. MurA subfamily.

The protein localises to the cytoplasm. It catalyses the reaction phosphoenolpyruvate + UDP-N-acetyl-alpha-D-glucosamine = UDP-N-acetyl-3-O-(1-carboxyvinyl)-alpha-D-glucosamine + phosphate. Its pathway is cell wall biogenesis; peptidoglycan biosynthesis. Functionally, cell wall formation. Adds enolpyruvyl to UDP-N-acetylglucosamine. This chain is UDP-N-acetylglucosamine 1-carboxyvinyltransferase, found in Rhizobium leguminosarum bv. trifolii (strain WSM2304).